A 209-amino-acid chain; its full sequence is Outer-membrane lipoprotein carrier protein (209 aa).

Residues 1–21 form the signal peptide; the sequence is MKLLKLLSVAALSAASMMANA.

The protein belongs to the LolA family. As to quaternary structure, monomer.

The protein localises to the periplasm. In terms of biological role, participates in the translocation of lipoproteins from the inner membrane to the outer membrane. Only forms a complex with a lipoprotein if the residue after the N-terminal Cys is not an aspartate (The Asp acts as a targeting signal to indicate that the lipoprotein should stay in the inner membrane). The sequence is that of Outer-membrane lipoprotein carrier protein from Hahella chejuensis (strain KCTC 2396).